An 81-amino-acid chain; its full sequence is Centromere protein X (81 aa).

Met1 bears the N-acetylmethionine mark.

This sequence belongs to the CENP-X/MHF2 family. In terms of assembly, heterodimer with CENPX, sometimes called MHF; this interaction stabilizes both partners. MHF heterodimers can assemble to form tetrameric structures. MHF also coassemble with CENPT-CENPW heterodimers at centromeres to form the tetrameric CENP-T-W-S-X complex. Forms a discrete complex with FANCM and CENPX, called FANCM-MHF; this interaction, probably mediated by direct binding between CENPS and FANCM, leads to synergistic activation of double-stranded DNA binding and strongly stimulates FANCM-mediated DNA remodeling. Recruited by FANCM to the Fanconi anemia (FA) core complex, which consists of CENPS, CENPX, FANCA, FANCB, FANCC, FANCE, FANCF, FANCG, FANCL, FANCM, FAAP24 and FAAP100. The FA core complex associates with Bloom syndrome (BLM) complex, which consists of at least BLM, DNA topoisomerase 3-alpha (TOP3A), RMI1/BLAP75, RPA1/RPA70 and RPA2/RPA32. The super complex between FA and BLM is called BRAFT.

The protein localises to the nucleus. It is found in the chromosome. It localises to the centromere. The protein resides in the kinetochore. Its function is as follows. DNA-binding component of the Fanconi anemia (FA) core complex. Required for the normal activation of the FA pathway, leading to monoubiquitination of the FANCI-FANCD2 complex in response to DNA damage, cellular resistance to DNA cross-linking drugs, and prevention of chromosomal breakage. In complex with CENPS (MHF heterodimer), crucial cofactor for FANCM in both binding and ATP-dependent remodeling of DNA. Stabilizes FANCM. In complex with CENPS and FANCM (but not other FANC proteins), rapidly recruited to blocked forks and promotes gene conversion at blocked replication forks. In complex with CENPS, CENPT and CENPW (CENP-T-W-S-X heterotetramer), involved in the formation of a functional kinetochore outer plate, which is essential for kinetochore-microtubule attachment and faithful mitotic progression. As a component of MHF and CENP-T-W-S-X complexes, binds DNA and bends it to form a nucleosome-like structure. DNA-binding function is fulfilled in the presence of CENPS, with the following preference for DNA substates: Holliday junction &gt; double-stranded &gt; splay arm &gt; single-stranded. Does not bind DNA on its own. The chain is Centromere protein X (CENPX) from Pongo abelii (Sumatran orangutan).